Here is a 259-residue protein sequence, read N- to C-terminus: Complement factor D (259 aa).

A signal peptide spans 1–21 (MADRSGHLAALILLGAAVCVA). The propeptide at 22–26 (QPRGR) is activation peptide. The region spanning 27–254 (ILGGQEAKSH…YVAWIDGVMA (228 aa)) is the Peptidase S1 domain. C52 and C68 form a disulfide bridge. Catalysis depends on charge relay system residues H67 and D115. Intrachain disulfides connect C149–C215, C180–C196, and C205–C230. The Charge relay system role is filled by S209. The tract at residues 224–228 (TSGSR) is self-inhibitor loop.

Belongs to the peptidase S1 family. In terms of processing, CFD is activated by the removal of 5 residues at the N-terminus, named activation peptide, by the MASP-3 isoform of MASP1.

It is found in the secreted. The enzyme catalyses Selective cleavage of Arg-|-Lys bond in complement factor B when in complex with complement subcomponent C3b or with cobra venom factor.. Circulates in plasma in a mature but self-inhibited form. Activated by factor B (CFB), which displaces the self-inhibition loop. Associates with CFB complexed with complement C3b. Functionally, serine protease that initiates the alternative pathway of the complement system, a cascade of proteins that leads to phagocytosis and breakdown of pathogens and signaling that strengthens the adaptive immune system. In contrast to other complement pathways (classical, lectin and GZMK) that are directly activated by pathogens or antigen-antibody complexes, the alternative complement pathway is initiated by the spontaneous hydrolysis of complement C3. The alternative complement pathway acts as an amplification loop that enhances complement activation by mediating the formation of C3 and C5 convertases. Activated CFD cleaves factor B (CFB) when the latter is complexed with complement C3b, activating the C3 convertase of the alternative pathway. The protein is Complement factor D (CFD) of Sus scrofa (Pig).